A 247-amino-acid chain; its full sequence is Bidirectional sugar transporter SWEET1 (247 aa).

Topologically, residues Met1–Thr6 are extracellular. The helical transmembrane segment at Ile7–Phe27 threads the bilayer. In terms of domain architecture, MtN3/slv 1 spans Ile7–Lys94. Topologically, residues Lys28–Gly41 are cytoplasmic. Residues Ile42–Val62 form a helical membrane-spanning segment. Residues Ser63 to Thr71 are Extracellular-facing. The chain crosses the membrane as a helical span at residues Ile72–Pro92. Over Lys93–Lys98 the chain is Cytoplasmic. A helical transmembrane segment spans residues Ile99–Phe119. Residues Ala120 to Lys127 are Extracellular-facing. Residues Leu128–Ile148 traverse the membrane as a helical segment. In terms of domain architecture, MtN3/slv 2 spans Cys130–Lys213. At Met149–Pro162 the chain is on the cytoplasmic side. A helical membrane pass occupies residues Phe163–Gly183. The Extracellular segment spans residues Arg184 to Phe187. Residues Val188–Ile208 traverse the membrane as a helical segment. Topologically, residues Tyr209–Val247 are cytoplasmic. Basic and acidic residues predominate over residues Gln221–Gln236. Positions Gln221 to Val247 are disordered. Residues Asn237–Val247 are compositionally biased toward polar residues.

This sequence belongs to the SWEET sugar transporter family. As to quaternary structure, forms homooligomers and heterooligomers with SWEET9, SWEET11, SWEET13, SWEET15, SWEET16 and SWEET17. As to expression, mainly expressed in flowers.

The protein localises to the cell membrane. It localises to the endoplasmic reticulum membrane. Mediates both low-affinity uptake and efflux of sugar across the plasma membrane. Can transport glucose, and, to a lower extent, mannose, fructose and galactose. This chain is Bidirectional sugar transporter SWEET1, found in Arabidopsis thaliana (Mouse-ear cress).